Consider the following 414-residue polypeptide: uncharacterized protein (414 aa).

Disordered regions lie at residues 136 to 168 (SSKSMAPTAEKELEKPLENGSELQEGDSLTVPT), 298 to 322 (KNFPDSGMRRAVQTPSPQNKMSYHR), and 350 to 382 (PPHSRPMHGSYNKVHVNKEPKPNLSPDKYMSTS).

This is an uncharacterized protein from Macaca fascicularis (Crab-eating macaque).